We begin with the raw amino-acid sequence, 242 residues long: Biosynthetic peptidoglycan transglycosylase (242 aa).

A helical membrane pass occupies residues 19–39 (ILAALAVFWGGGIALFSVVPV).

This sequence belongs to the glycosyltransferase 51 family.

Its subcellular location is the cell inner membrane. The catalysed reaction is [GlcNAc-(1-&gt;4)-Mur2Ac(oyl-L-Ala-gamma-D-Glu-L-Lys-D-Ala-D-Ala)](n)-di-trans,octa-cis-undecaprenyl diphosphate + beta-D-GlcNAc-(1-&gt;4)-Mur2Ac(oyl-L-Ala-gamma-D-Glu-L-Lys-D-Ala-D-Ala)-di-trans,octa-cis-undecaprenyl diphosphate = [GlcNAc-(1-&gt;4)-Mur2Ac(oyl-L-Ala-gamma-D-Glu-L-Lys-D-Ala-D-Ala)](n+1)-di-trans,octa-cis-undecaprenyl diphosphate + di-trans,octa-cis-undecaprenyl diphosphate + H(+). It participates in cell wall biogenesis; peptidoglycan biosynthesis. Peptidoglycan polymerase that catalyzes glycan chain elongation from lipid-linked precursors. The polypeptide is Biosynthetic peptidoglycan transglycosylase (Salmonella agona (strain SL483)).